A 762-amino-acid polypeptide reads, in one-letter code: Primary amine oxidase, liver isozyme (762 aa).

Residues 1–16 (MFIFIFLSLWTLLVMG) form the signal peptide. The interval 23 to 54 (GSEEGVGKQCHPSLPPRCPSRSPSDQPWTHPD) is disordered. Asn136 carries N-linked (GlcNAc...) asparagine glycosylation. An intrachain disulfide couples Cys197 to Cys198. Asn231 carries N-linked (GlcNAc...) asparagine glycosylation. 383–393 (YMDSGFGMGYF) is a substrate binding site. The active-site Proton acceptor is Asp385. Cys403 and Cys429 are disulfide-bonded. 467–472 (MLNYDY) contacts substrate. Tyr470 functions as the Schiff-base intermediate with substrate; via topaquinone in the catalytic mechanism. 2',4',5'-topaquinone is present on Tyr470. The Cu cation site is built by His519 and His521. Ca(2+) contacts are provided by Asp528, Leu529, Asp530, Glu571, Phe662, and Asn664. Asn665 is a glycosylation site (N-linked (GlcNAc...) asparagine). Ca(2+) is bound by residues Glu666, Asp672, and Leu673. Cu cation is bound at residue His683. Cys733 and Cys740 are disulfide-bonded.

Belongs to the copper/topaquinone oxidase family. In terms of assembly, homodimer; disulfide-linked. Cu cation serves as cofactor. Requires Ca(2+) as cofactor. The cofactor is L-topaquinone. Post-translationally, topaquinone (TPQ) is generated by copper-dependent autoxidation of a specific tyrosyl residue. In terms of tissue distribution, liver.

The protein resides in the secreted. The protein localises to the extracellular space. The enzyme catalyses a primary methyl amine + O2 + H2O = an aldehyde + H2O2 + NH4(+). This chain is Primary amine oxidase, liver isozyme, found in Bos taurus (Bovine).